The sequence spans 224 residues: Ribose-5-phosphate isomerase A (224 aa).

Substrate is bound by residues 32–35 (TGST), 85–88 (DGAD), and 98–101 (KGGG). E107 functions as the Proton acceptor in the catalytic mechanism. K125 contacts substrate.

It belongs to the ribose 5-phosphate isomerase family. Homodimer.

It carries out the reaction aldehydo-D-ribose 5-phosphate = D-ribulose 5-phosphate. Its pathway is carbohydrate degradation; pentose phosphate pathway; D-ribose 5-phosphate from D-ribulose 5-phosphate (non-oxidative stage): step 1/1. Catalyzes the reversible conversion of ribose-5-phosphate to ribulose 5-phosphate. The protein is Ribose-5-phosphate isomerase A of Pseudomonas putida (strain ATCC 700007 / DSM 6899 / JCM 31910 / BCRC 17059 / LMG 24140 / F1).